The primary structure comprises 214 residues: Thioredoxin-like 4, chloroplastic (214 aa).

A compositionally biased stretch (low complexity) spans 1–20 (MITASLLPLPATSSSSGRRS). The tract at residues 1 to 68 (MITASLLPLP…STNGSLPGLP (68 aa)) is disordered. Residues 1-71 (MITASLLPLP…GSLPGLPPVV (71 aa)) constitute a chloroplast transit peptide. Over residues 21-34 (LPPPTTTFPRPPPP) the composition is skewed to pro residues. Residues 42–53 (SSSSSSASSTES) are compositionally biased toward low complexity. Residues 72 to 199 (VEEEEEEFCP…IIAAIQKYTA (128 aa)) form the Thioredoxin domain. Active-site nucleophile residues include Cys117 and Cys120. Cys117 and Cys120 are oxidised to a cystine.

This sequence belongs to the thioredoxin family.

The protein resides in the plastid. It is found in the chloroplast. In terms of biological role, probable thiol-disulfide oxidoreductase that may participate in various redox reactions. This Oryza sativa subsp. japonica (Rice) protein is Thioredoxin-like 4, chloroplastic.